Reading from the N-terminus, the 67-residue chain is Conotoxin TsMMSK-B021 (67 aa).

Positions 1–20 (MMSKLGVLLTICLLLFPLTA) are cleaved as a signal peptide. A propeptide spanning residues 21–50 (VQLDGDQPADLPELRAQDFAPERSPWFDPV) is cleaved from the precursor. 3 disulfide bridges follow: cysteine 53–cysteine 65, cysteine 54–cysteine 61, and cysteine 58–cysteine 64. 4-hydroxyproline is present on proline 63.

This sequence belongs to the conotoxin M superfamily. Expressed by the venom duct.

Its subcellular location is the secreted. In Conus tessulatus (Tessellate cone), this protein is Conotoxin TsMMSK-B021.